The primary structure comprises 100 residues: Co-chaperonin GroES (100 aa).

This sequence belongs to the GroES chaperonin family. As to quaternary structure, heptamer of 7 subunits arranged in a ring. Interacts with the chaperonin GroEL.

The protein localises to the cytoplasm. Functionally, together with the chaperonin GroEL, plays an essential role in assisting protein folding. The GroEL-GroES system forms a nano-cage that allows encapsulation of the non-native substrate proteins and provides a physical environment optimized to promote and accelerate protein folding. GroES binds to the apical surface of the GroEL ring, thereby capping the opening of the GroEL channel. The chain is Co-chaperonin GroES from Mycobacterium tuberculosis (strain CDC 1551 / Oshkosh).